Reading from the N-terminus, the 240-residue chain is Large ribosomal subunit protein uL2 (240 aa).

Residues 1 to 11 (MGKRLISQNRG) are compositionally biased toward polar residues. 2 disordered regions span residues 1-28 (MGKR…KGAV) and 206-240 (GGGR…TGRK). Basic residues-rich tracts occupy residues 13-28 (GTPK…KGAV) and 224-240 (SPGR…TGRK).

It belongs to the universal ribosomal protein uL2 family. As to quaternary structure, part of the 50S ribosomal subunit. Forms a bridge to the 30S subunit in the 70S ribosome.

One of the primary rRNA binding proteins. Required for association of the 30S and 50S subunits to form the 70S ribosome, for tRNA binding and peptide bond formation. It has been suggested to have peptidyltransferase activity; this is somewhat controversial. Makes several contacts with the 16S rRNA in the 70S ribosome. This chain is Large ribosomal subunit protein uL2, found in Methanococcus maripaludis (strain C7 / ATCC BAA-1331).